A 155-amino-acid chain; its full sequence is Myelin basic protein (155 aa).

Disordered stretches follow at residues Met1–Thr70 and Thr109–Arg155. Residue Ala2 is modified to N-acetylalanine. Composition is skewed to basic and acidic residues over residues Gly37 to Ala49 and Lys123 to Gly134.

Belongs to the myelin basic protein family.

The protein resides in the myelin membrane. Functionally, this protein may function to maintain proper structure of myelin. The protein is Myelin basic protein (MBP) of Heterodontus francisci (Horn shark).